A 142-amino-acid polypeptide reads, in one-letter code: Large ribosomal subunit protein uL13 (142 aa).

The protein belongs to the universal ribosomal protein uL13 family. Part of the 50S ribosomal subunit.

In terms of biological role, this protein is one of the early assembly proteins of the 50S ribosomal subunit, although it is not seen to bind rRNA by itself. It is important during the early stages of 50S assembly. The chain is Large ribosomal subunit protein uL13 from Stenotrophomonas maltophilia (strain K279a).